Here is a 322-residue protein sequence, read N- to C-terminus: MSGELPPNINIKEPRWDQSTFIGRAKHFFTVTDPRNILLTNAQLEAARKVVHDYRQGIVPSGLTENELWRAKYIYDSAFHPDTGEKMILIGRMSAQVPMNMTITGCMMTFYRTTPAVLFWQWVNQSFNAVVNYTNRSGDAPLTVNELGTAYVSATTGAVATALGLNALTKRVSPLVGRFVPFAAVAAANCINIPLMRQRELKVGIPVTDENGNRLGESASAAKQAITQVVVSRILMAAPGMAIPPFIMNTLEKKAFLKRFPWMSAPVQVGIVGFCLVFATPLCCALFPQKSSMSVTSLEAELQARIRETYPELRRVYFNKGL.

Ser2 bears the N-acetylserine mark. At 2–102 (SGELPPNINI…MSAQVPMNMT (101 aa)) the chain is on the mitochondrial matrix side. Residues 103–120 (ITGCMMTFYRTTPAVLFW) traverse the membrane as a helical segment. Topologically, residues 121–146 (QWVNQSFNAVVNYTNRSGDAPLTVNE) are mitochondrial intermembrane. A helical membrane pass occupies residues 147–167 (LGTAYVSATTGAVATALGLNA). Over 168-174 (LTKRVSP) the chain is Mitochondrial matrix. Residues 175-195 (LVGRFVPFAAVAAANCINIPL) form a helical membrane-spanning segment. Topologically, residues 196 to 228 (MRQRELKVGIPVTDENGNRLGESASAAKQAITQ) are mitochondrial intermembrane. A helical transmembrane segment spans residues 229 to 249 (VVVSRILMAAPGMAIPPFIMN). The Mitochondrial matrix segment spans residues 250 to 266 (TLEKKAFLKRFPWMSAP). The helical transmembrane segment at 267-287 (VQVGIVGFCLVFATPLCCALF) threads the bilayer. The Mitochondrial intermembrane segment spans residues 288-322 (PQKSSMSVTSLEAELQARIRETYPELRRVYFNKGL).

Belongs to the sideroflexin family.

Its subcellular location is the mitochondrion inner membrane. It catalyses the reaction L-serine(in) = L-serine(out). It carries out the reaction L-alanine(in) = L-alanine(out). The catalysed reaction is L-cysteine(in) = L-cysteine(out). Its function is as follows. Amino acid transporter importing serine, an essential substrate of the mitochondrial branch of the one-carbon pathway, into mitochondria. Mitochondrial serine is then converted to glycine and formate, which exits to the cytosol where it is used to generate the charged folates that serve as one-carbon donors. May also transport other amino acids including alanine and cysteine. This chain is Sideroflexin-1 (SFXN1), found in Ovis aries (Sheep).